Reading from the N-terminus, the 437-residue chain is Ribosomal protein uS12 methylthiotransferase RimO (437 aa).

An MTTase N-terminal domain is found at 4–114; that stretch reads PRVSFVSLGC…VMNAVHEVAP (111 aa). C13, C49, C78, C145, C149, and C152 together coordinate [4Fe-4S] cluster. The Radical SAM core domain maps to 131-369; the sequence is LTPRHYAYLK…MAKQQQISTN (239 aa). Positions 372–437 constitute a TRAM domain; the sequence is KKKVGKRLPV…DAYDLHGTAV (66 aa).

The protein belongs to the methylthiotransferase family. RimO subfamily. [4Fe-4S] cluster serves as cofactor.

The protein resides in the cytoplasm. The enzyme catalyses L-aspartate(89)-[ribosomal protein uS12]-hydrogen + (sulfur carrier)-SH + AH2 + 2 S-adenosyl-L-methionine = 3-methylsulfanyl-L-aspartate(89)-[ribosomal protein uS12]-hydrogen + (sulfur carrier)-H + 5'-deoxyadenosine + L-methionine + A + S-adenosyl-L-homocysteine + 2 H(+). Functionally, catalyzes the methylthiolation of an aspartic acid residue of ribosomal protein uS12. This is Ribosomal protein uS12 methylthiotransferase RimO from Brucella abortus (strain S19).